A 131-amino-acid chain; its full sequence is Small ribosomal subunit protein uS8 (131 aa).

Belongs to the universal ribosomal protein uS8 family. Part of the 30S ribosomal subunit. Contacts proteins S5 and S12.

One of the primary rRNA binding proteins, it binds directly to 16S rRNA central domain where it helps coordinate assembly of the platform of the 30S subunit. The sequence is that of Small ribosomal subunit protein uS8 from Rhizorhabdus wittichii (strain DSM 6014 / CCUG 31198 / JCM 15750 / NBRC 105917 / EY 4224 / RW1) (Sphingomonas wittichii).